A 330-amino-acid chain; its full sequence is L-lactate dehydrogenase (330 aa).

Residues valine 31, aspartate 52, lysine 57, and 96 to 97 contribute to the NAD(+) site; that span reads GA. Substrate-binding positions include glutamine 99, arginine 105, and 137–140; that span reads NPVD. Residues 135 to 137 and serine 160 contribute to the NAD(+) site; that span reads VSN. 165-168 lines the substrate pocket; the sequence is DTAR. 2 residues coordinate beta-D-fructose 1,6-bisphosphate: arginine 170 and histidine 185. Histidine 192 (proton acceptor) is an active-site residue. Tyrosine 238 is modified (phosphotyrosine). Residue threonine 247 coordinates substrate.

The protein belongs to the LDH/MDH superfamily. LDH family. Homotetramer.

The protein resides in the cytoplasm. It catalyses the reaction (S)-lactate + NAD(+) = pyruvate + NADH + H(+). The protein operates within fermentation; pyruvate fermentation to lactate; (S)-lactate from pyruvate: step 1/1. Allosterically activated by fructose 1,6-bisphosphate (FBP). Its function is as follows. Catalyzes the conversion of lactate to pyruvate. The protein is L-lactate dehydrogenase of Gloeobacter violaceus (strain ATCC 29082 / PCC 7421).